The sequence spans 704 residues: Elongation factor G (704 aa).

Residues Asn-10–Leu-290 form the tr-type G domain. GTP contacts are provided by residues Ala-19–Thr-26, Asp-83–His-87, and Asn-137–Asp-140. Positions Pro-293–Thr-313 are disordered. Positions His-298–Thr-313 are enriched in basic and acidic residues.

Belongs to the TRAFAC class translation factor GTPase superfamily. Classic translation factor GTPase family. EF-G/EF-2 subfamily.

The protein resides in the cytoplasm. Functionally, catalyzes the GTP-dependent ribosomal translocation step during translation elongation. During this step, the ribosome changes from the pre-translocational (PRE) to the post-translocational (POST) state as the newly formed A-site-bound peptidyl-tRNA and P-site-bound deacylated tRNA move to the P and E sites, respectively. Catalyzes the coordinated movement of the two tRNA molecules, the mRNA and conformational changes in the ribosome. The polypeptide is Elongation factor G (Renibacterium salmoninarum (strain ATCC 33209 / DSM 20767 / JCM 11484 / NBRC 15589 / NCIMB 2235)).